The sequence spans 209 residues: Large ribosomal subunit protein bL25 (209 aa).

The segment at 190 to 209 is disordered; that stretch reads LKSEEAASEGAAEEEAKDGE. Residues 200–209 show a composition bias toward acidic residues; sequence AAEEEAKDGE.

It belongs to the bacterial ribosomal protein bL25 family. CTC subfamily. As to quaternary structure, part of the 50S ribosomal subunit; part of the 5S rRNA/L5/L18/L25 subcomplex. Contacts the 5S rRNA. Binds to the 5S rRNA independently of L5 and L18.

This is one of the proteins that binds to the 5S RNA in the ribosome where it forms part of the central protuberance. The sequence is that of Large ribosomal subunit protein bL25 from Brucella anthropi (strain ATCC 49188 / DSM 6882 / CCUG 24695 / JCM 21032 / LMG 3331 / NBRC 15819 / NCTC 12168 / Alc 37) (Ochrobactrum anthropi).